The sequence spans 109 residues: Iron-sulfur cluster assembly protein CyaY (109 aa).

It belongs to the frataxin family.

Functionally, involved in iron-sulfur (Fe-S) cluster assembly. May act as a regulator of Fe-S biogenesis. In Shewanella putrefaciens (strain CN-32 / ATCC BAA-453), this protein is Iron-sulfur cluster assembly protein CyaY.